The sequence spans 1437 residues: uncharacterized protein (1437 aa).

The first 25 residues, 1 to 25 (MRRGCRHHLAAVVLLIATFPPLAYN), serve as a signal peptide directing secretion. Topologically, residues 26-1326 (QNIGGINQNI…SRIKENYFKW (1301 aa)) are extracellular. Residues asparagine 103, asparagine 315, asparagine 364, asparagine 492, asparagine 605, asparagine 676, and asparagine 914 are each glycosylated (N-linked (GlcNAc...) asparagine). Residues 193–356 (AFFGQQASQA…GRYMFRVDDV (164 aa)) form the NIDO domain. Residues 648 to 829 (VKEKSREMCH…FRCQMFYWRR (182 aa)) enclose the AMOP domain. Residues 1327-1347 (LAVIAGIVGIIIVILLIFLVF) traverse the membrane as a helical segment. Residues 1348-1437 (WCIKRKKLQE…QGMLGLNTSV (90 aa)) lie on the Cytoplasmic side of the membrane. Positions 1394–1419 (PRTVAMPPPRGTTATPMTLEPRGFSP) are disordered.

It is found in the membrane. This is an uncharacterized protein from Caenorhabditis elegans.